A 665-amino-acid polypeptide reads, in one-letter code: BTB/POZ domain-containing protein At1g30440 (665 aa).

The BTB domain maps to 28-98 (SDIVVEVGEM…CYGVKLELTA (71 aa)). The 295-residue stretch at 214 to 508 (DWWYEDASML…VQVLFFEQLQ (295 aa)) folds into the NPH3 domain. The interval 260–280 (LKRRRGGPESSGRFSTPLGSG) is disordered. Residues 271–280 (GRFSTPLGSG) show a composition bias toward polar residues. Ser-279 carries the post-translational modification Phosphoserine. Residues 281–306 (NVLSEEEQKNLLEEIQELLRMQKGLV) adopt a coiled-coil conformation. Residue Tyr-449 is modified to Phosphotyrosine. The span at 626-639 (SAQEGSVSKSNNEN) shows a compositional bias: polar residues. The disordered stretch occupies residues 626–665 (SAQEGSVSKSNNENVKIEKLKDVKERRGKHKKASSISSER). Residues 640 to 650 (VKIEKLKDVKE) are compositionally biased toward basic and acidic residues.

Belongs to the NPH3 family.

It participates in protein modification; protein ubiquitination. Functionally, may act as a substrate-specific adapter of an E3 ubiquitin-protein ligase complex (CUL3-RBX1-BTB) which mediates the ubiquitination and subsequent proteasomal degradation of target proteins. This is BTB/POZ domain-containing protein At1g30440 from Arabidopsis thaliana (Mouse-ear cress).